The following is a 75-amino-acid chain: Small integral membrane protein 15 (75 aa).

Residues 21 to 41 (YGFLITVLLALTPLFLASAVL) form a helical membrane-spanning segment. Residues 49 to 75 (IEAKERDQKKKQKRQENIAKAKRTKKD) are a coiled coil. The span at 52-67 (KERDQKKKQKRQENIA) shows a compositional bias: basic and acidic residues. A disordered region spans residues 52–75 (KERDQKKKQKRQENIAKAKRTKKD).

It belongs to the SMIM15 family.

It localises to the membrane. This is Small integral membrane protein 15 (smim15) from Xenopus laevis (African clawed frog).